A 668-amino-acid chain; its full sequence is MIRGLLLGIIWMIFCVCSSFQQETPFVYNNFGHVDHLHLDGSARIIPSGGILQLTNATNSQIGHVFYEKPIEFKSSESVSFSTYFVCALLPAGDPSGHGMTFFVSHSTDFKGAEATRYFGIFNRNGSTSTRVLAVELDTSLASDVKDISDNHVGIDVNSAESITSANASYFSDKEGKKIDIKLLSGDPIQVWVDYEGTTLNVSLAPLRNKKPSRPLLSSTSINLTDILQGRRMFVGFSGSTGSSMSYQYILGWSFSKSMASLPNIDISKLPKVPHSSTKKKSTSPVLSVLLGLIAFIVLGILVVAYLYRRNLYSEVREEWEKEYGPIRYSYKSLYKATKGFNRSEFLGRGGFGEVYKGTLPRSRELREVAVKRVSHDGEHGMKQFVAEIVSMRSLKHRSLVPLLGYCRRKHELLLVSEYMPNGSLDHYLFNHDRLSLPWWRRLAILRDIASALSYLHTEADQVVIHRDIKAANVMLDAEFNGRLGDFGMSRLYDRGADPSTTAAVGTVGYMAPELTTMGASTGTDVYAFGVFLLEVTCGRRPVEPGLPEAKRFLIKWVSECWKRSSLIDARDPRLTEFSSQEVEKVLKLGLLCANLAPDSRPAMEQVVQYLNGNLALPEFWPNSPGIGVLSPMALSPAPLVIPSLSFSSSSSNNSMFITHSVLYGSGR.

A signal peptide spans 1-21 (MIRGLLLGIIWMIFCVCSSFQ). Topologically, residues 22–285 (QETPFVYNNF…SSTKKKSTSP (264 aa)) are extracellular. Positions 24–256 (TPFVYNNFGH…YQYILGWSFS (233 aa)) are legume-lectin like. 5 N-linked (GlcNAc...) asparagine glycosylation sites follow: asparagine 56, asparagine 125, asparagine 167, asparagine 201, and asparagine 223. Residues 286-306 (VLSVLLGLIAFIVLGILVVAY) form a helical membrane-spanning segment. At 307-668 (LYRRNLYSEV…THSVLYGSGR (362 aa)) the chain is on the cytoplasmic side. The region spanning 341-620 (FNRSEFLGRG…LNGNLALPEF (280 aa)) is the Protein kinase domain. Residues 347–355 (LGRGGFGEV) and lysine 372 each bind ATP. The active-site Proton acceptor is aspartate 468.

The protein in the C-terminal section; belongs to the protein kinase superfamily. Ser/Thr protein kinase family. It in the N-terminal section; belongs to the leguminous lectin family.

The protein resides in the cell membrane. It catalyses the reaction L-seryl-[protein] + ATP = O-phospho-L-seryl-[protein] + ADP + H(+). The enzyme catalyses L-threonyl-[protein] + ATP = O-phospho-L-threonyl-[protein] + ADP + H(+). In terms of biological role, involved in resistance response to the pathogenic oomycetes Phytophthora infestans and Phytophthora capsici. This Arabidopsis thaliana (Mouse-ear cress) protein is L-type lectin-domain containing receptor kinase I.7.